The chain runs to 325 residues: Peroxidase RIP1 (325 aa).

The signal sequence occupies residues 1–21 (MASSSPCQIFLVFVMVTLVTS). Disulfide bonds link cysteine 38-cysteine 118, cysteine 71-cysteine 76, cysteine 125-cysteine 321, and cysteine 206-cysteine 231. Histidine 69 functions as the Proton acceptor in the catalytic mechanism. Ca(2+) contacts are provided by aspartate 70, valine 73, glycine 75, aspartate 77, and serine 79. Residue asparagine 87 is glycosylated (N-linked (GlcNAc...) asparagine). Proline 169 provides a ligand contact to substrate. N-linked (GlcNAc...) asparagine glycosylation occurs at asparagine 174. Histidine 199 contacts heme b. Residue threonine 200 coordinates Ca(2+). Asparagine 215 is a glycosylation site (N-linked (GlcNAc...) asparagine). Residues aspartate 244, threonine 246, and glutamate 251 each contribute to the Ca(2+) site.

Belongs to the peroxidase family. Classical plant (class III) peroxidase subfamily. Heme b is required as a cofactor. The cofactor is Ca(2+). Expressed in the differentiating root epidermis following inoculation with the bacterial symbiont Sinorhizobium meliloti.

It is found in the secreted. It carries out the reaction 2 a phenolic donor + H2O2 = 2 a phenolic radical donor + 2 H2O. Its function is as follows. Removal of H(2)O(2), oxidation of toxic reductants, biosynthesis and degradation of lignin, suberization, auxin catabolism, response to environmental stresses such as wounding, pathogen attack and oxidative stress. These functions might be dependent on each isozyme/isoform in each plant tissue. This Medicago truncatula (Barrel medic) protein is Peroxidase RIP1.